Here is a 544-residue protein sequence, read N- to C-terminus: Chaperonin GroEL 2 (544 aa).

ATP-binding positions include 29-32 (TLGP), 86-90 (DGTTT), Gly413, 482-484 (NVL), and Asp498.

It belongs to the chaperonin (HSP60) family. Forms a cylinder of 14 subunits composed of two heptameric rings stacked back-to-back. Interacts with the co-chaperonin GroES.

The protein localises to the cytoplasm. The catalysed reaction is ATP + H2O + a folded polypeptide = ADP + phosphate + an unfolded polypeptide.. Its function is as follows. Together with its co-chaperonin GroES, plays an essential role in assisting protein folding. The GroEL-GroES system forms a nano-cage that allows encapsulation of the non-native substrate proteins and provides a physical environment optimized to promote and accelerate protein folding. The chain is Chaperonin GroEL 2 from Roseiflexus sp. (strain RS-1).